The sequence spans 443 residues: MMDAWPRCLERLEAEFPPEDVHTWLKPLQAEDRGDSIVLYAPNAFIVDQVRERYLPRIRELLAYFAGNGEVALAVGSRPRAPEPAPAPVAATIAPQAAPIAPFAGNLDSHYTFANFVEGRSNQLGLAAAIQAAQKPGDRAHNPLLLYGSTGLGKTHLMFAAGNALRQAKPAAKVMYLRSEQFFSAMIRALQDKAMDQFKRQFQQIDALLIDDIQFFAGKDRTQEEFFHTFNALFDGRQQIILTCDRYPREVEGLEPRLKSRLAWGLSVAIDPPDFETRAAIVLAKARERGAEIPDDVAFLIAKKMRSNVRDLEGALNTLVARANFTGRSITVEFAQETLRDLLRAQQQAIGIPNIQKTVADYYGLQMKDLLSKRRTRSLARPRQVAMALAKELTEHSLPEIGDAFAGRDHTTVLHACRQIRTLMEADGKLREDWEKLIRKLSE.

Residues 1–76 (MMDAWPRCLE…GNGEVALAVG (76 aa)) form a domain I, interacts with DnaA modulators region. Positions 76-105 (GSRPRAPEPAPAPVAATIAPQAAPIAPFAG) are domain II. A domain III, AAA+ region region spans residues 106 to 323 (NLDSHYTFAN…GALNTLVARA (218 aa)). ATP is bound by residues Gly151, Gly153, Lys154, and Thr155. The domain IV, binds dsDNA stretch occupies residues 324–443 (NFTGRSITVE…WEKLIRKLSE (120 aa)).

It belongs to the DnaA family. Oligomerizes as a right-handed, spiral filament on DNA at oriC.

The protein localises to the cytoplasm. Functionally, plays an essential role in the initiation and regulation of chromosomal replication. ATP-DnaA binds to the origin of replication (oriC) to initiate formation of the DNA replication initiation complex once per cell cycle. Binds the DnaA box (a 9 base pair repeat at the origin) and separates the double-stranded (ds)DNA. Forms a right-handed helical filament on oriC DNA; dsDNA binds to the exterior of the filament while single-stranded (ss)DNA is stabiized in the filament's interior. The ATP-DnaA-oriC complex binds and stabilizes one strand of the AT-rich DNA unwinding element (DUE), permitting loading of DNA polymerase. After initiation quickly degrades to an ADP-DnaA complex that is not apt for DNA replication. Binds acidic phospholipids. The polypeptide is Chromosomal replication initiator protein DnaA (Xanthomonas oryzae pv. oryzae (strain KACC10331 / KXO85)).